The sequence spans 294 residues: Foldase protein PrsA 1 (294 aa).

Residues 1-21 form the signal peptide; it reads MTKLKKVMISVIAATLLLLAG. A lipid anchor (N-palmitoyl cysteine) is attached at C22. The S-diacylglycerol cysteine moiety is linked to residue C22. Residues 135–226 form the PpiC domain; the sequence is EPDITVRHIL…YGYHLIQLVK (92 aa).

This sequence belongs to the PrsA family.

The protein localises to the cell membrane. The enzyme catalyses [protein]-peptidylproline (omega=180) = [protein]-peptidylproline (omega=0). In terms of biological role, plays a major role in protein secretion by helping the post-translocational extracellular folding of several secreted proteins. This is Foldase protein PrsA 1 (prsA1) from Listeria monocytogenes serovar 1/2a (strain ATCC BAA-679 / EGD-e).